The primary structure comprises 212 residues: Redox-sensing transcriptional repressor Rex (212 aa).

Positions 16–55 (IYYRYLNILLDADKTRVSSTELSEAVKVDSATIRRDFSYF) form a DNA-binding region, H-T-H motif. 90 to 95 (GVGNLG) is a binding site for NAD(+).

The protein belongs to the transcriptional regulatory Rex family. In terms of assembly, homodimer.

It localises to the cytoplasm. Its function is as follows. Modulates transcription in response to changes in cellular NADH/NAD(+) redox state. The polypeptide is Redox-sensing transcriptional repressor Rex (Levilactobacillus brevis (strain ATCC 367 / BCRC 12310 / CIP 105137 / JCM 1170 / LMG 11437 / NCIMB 947 / NCTC 947) (Lactobacillus brevis)).